The following is a 168-amino-acid chain: Endoribonuclease YbeY (168 aa).

Residues histidine 119, histidine 123, and histidine 129 each contribute to the Zn(2+) site.

Belongs to the endoribonuclease YbeY family. Zn(2+) is required as a cofactor.

The protein localises to the cytoplasm. In terms of biological role, single strand-specific metallo-endoribonuclease involved in late-stage 70S ribosome quality control and in maturation of the 3' terminus of the 16S rRNA. This chain is Endoribonuclease YbeY, found in Gluconobacter oxydans (strain 621H) (Gluconobacter suboxydans).